The chain runs to 298 residues: Oxygen-dependent coproporphyrinogen-III oxidase (298 aa).

Position 92 (S92) interacts with substrate. A divalent metal cation contacts are provided by H96 and H106. H106 acts as the Proton donor in catalysis. 108-110 (NVR) is a binding site for substrate. Residues H145 and H175 each contribute to the a divalent metal cation site. The segment at 239–274 (YVEFNLVYDRGTLFGLQSGGRSESILMSLPPRVRWE) is important for dimerization. A substrate-binding site is contributed by 257–259 (GGR).

Belongs to the aerobic coproporphyrinogen-III oxidase family. Homodimer. Requires a divalent metal cation as cofactor.

It is found in the cytoplasm. The catalysed reaction is coproporphyrinogen III + O2 + 2 H(+) = protoporphyrinogen IX + 2 CO2 + 2 H2O. It participates in porphyrin-containing compound metabolism; protoporphyrin-IX biosynthesis; protoporphyrinogen-IX from coproporphyrinogen-III (O2 route): step 1/1. Its function is as follows. Involved in the heme biosynthesis. Catalyzes the aerobic oxidative decarboxylation of propionate groups of rings A and B of coproporphyrinogen-III to yield the vinyl groups in protoporphyrinogen-IX. This Stenotrophomonas maltophilia (strain R551-3) protein is Oxygen-dependent coproporphyrinogen-III oxidase.